We begin with the raw amino-acid sequence, 180 residues long: MHIEILRLGHRGERDKRISTHVALTSRAIGAKKILFTEEDKHVRESVERIVKSWGGEFKFEVLNSWKSYVKKFKDEGIVIHLTMYGENINNVMTDVKKELAKNSKPVLVIIGAEKVPREAYDLADYNLSVGNQPHSEVAALAIFLDRLTGGTALYSEYNDAKIAVTPSKFEKCVSVEKGK.

Residues leucine 82, 112–116 (GAEKV), and 130–137 (VGNQPHSE) each bind S-adenosyl-L-methionine.

This sequence belongs to the aTrm56 family. Homodimer.

The protein localises to the cytoplasm. The enzyme catalyses cytidine(56) in tRNA + S-adenosyl-L-methionine = 2'-O-methylcytidine(56) in tRNA + S-adenosyl-L-homocysteine + H(+). Functionally, specifically catalyzes the AdoMet-dependent 2'-O-ribose methylation of cytidine at position 56 in tRNAs. The chain is tRNA (cytidine(56)-2'-O)-methyltransferase from Methanococcus vannielii (strain ATCC 35089 / DSM 1224 / JCM 13029 / OCM 148 / SB).